Reading from the N-terminus, the 759-residue chain is Forkhead box protein M1 (759 aa).

Disordered regions lie at residues 1 to 54 (MRTS…AESS) and 94 to 165 (KGKE…QRQE). The span at 36–54 (PGQQEPTQAQASQDVAESS) shows a compositional bias: polar residues. Positions 141–151 (LGPKPGAKGVP) are enriched in low complexity. Glycyl lysine isopeptide (Lys-Gly) (interchain with G-Cter in SUMO2) cross-links involve residues Lys-200 and Lys-324. The segment at residues 234–326 (ERPPYSYMAM…LTLDQVFKPL (93 aa)) is a DNA-binding region (fork-head). Residues 328–349 (PGSPQSPEHLESQQKRPNPELR) are disordered. At Ser-330 the chain carries Phosphoserine. A compositionally biased stretch (basic and acidic residues) spans 335-349 (EHLESQQKRPNPELR). Residue Lys-355 forms a Glycyl lysine isopeptide (Lys-Gly) (interchain with G-Cter in SUMO2) linkage. Ser-375 carries the post-translational modification Phosphoserine; by CHEK2. Glycyl lysine isopeptide (Lys-Gly) (interchain with G-Cter in SUMO2) cross-links involve residues Lys-421 and Lys-439. Ser-521 is subject to Phosphoserine. Disordered stretches follow at residues 530–556 (LVTKRREKREVSRSRRKQHLQPPCLDE), 572–643 (MEIL…PQGA), and 681–706 (LASDPFSSSPPPHLEAKPGSPELQVP). The segment covering 531 to 542 (VTKRREKREVSR) has biased composition (basic and acidic residues). Residues 604-613 (PVSSTPSKSV) are compositionally biased toward polar residues. At Thr-608 the chain carries Phosphothreonine; by CDK1. Phosphothreonine is present on Thr-624. 2 positions are modified to phosphoserine; by PLK1: Ser-726 and Ser-735.

In terms of processing, phosphorylated in M (mitotic) phase. Phosphorylation by the checkpoint kinase CHEK2 in response to DNA damage increases the FOXM1 protein stability probably stimulating the transcription of genes involved in DNA repair. Phosphorylated by CDK1 in late S and G2 phases, creating docking sites for the POLO box domains of PLK1. Subsequently, PLK1 binds and phosphorylates FOXM1, leading to activation of transcriptional activity and subsequent enhanced expression of key mitotic regulators. Phosphorylated by GSK3B leading to ubiquitination and proteasomal degradation. Highly expressed in thymus and testis, but weakly in intestine and lung. Appears to be expressed only in adult organs containing proliferating/cycling cells or in response to growth factors.

It localises to the nucleus. Functionally, transcription factor regulating the expression of cell cycle genes essential for DNA replication and mitosis. Plays a role in the control of cell proliferation. Also plays a role in DNA break repair, participating in the DNA damage checkpoint response. Promotes transcription of PHB2. This is Forkhead box protein M1 (Foxm1) from Rattus norvegicus (Rat).